Reading from the N-terminus, the 447-residue chain is Putative bacteriocin-SkfA transport system permease protein SkfF (447 aa).

Topologically, residues 1–3 (MPF) are cytoplasmic. A helical transmembrane segment spans residues 4-22 (LIMLLFVGAIGFQVSFVSR). Over 23 to 29 (STTWDMS) the chain is Extracellular. The helical transmembrane segment at 30–50 (IAGWVLTGVFILYTAFGLFSN) threads the bilayer. Residues 51 to 59 (RLPSQMADI) lie on the Cytoplasmic side of the membrane. A helical transmembrane segment spans residues 60 to 80 (IWLYGTATSFSKVVYSVLFFS). Residues 81 to 85 (VTWKA) are Extracellular-facing. Residues 86–104 (LLWIISAIFGDVLIVLLSG) form a helical membrane-spanning segment. Residues 105–113 (DHINLLGRS) lie on the Cytoplasmic side of the membrane. A helical transmembrane segment spans residues 114 to 134 (IIFVGLFFIAEVWLMSVSCAR). The Extracellular portion of the chain corresponds to 135-141 (TVKKMKR). Residues 142–160 (VYVLVFLLMLGIYSICLYR) form a helical membrane-spanning segment. Residues 161–189 (FFFLQHSSGIWESIARFISGVGLVFDTLS) lie on the Cytoplasmic side of the membrane. Residues 190 to 208 (PLYVVVFIGIITVSFMTIA) traverse the membrane as a helical segment. The Extracellular segment spans residues 209–247 (FTSRQVEMKESLVKEAEFWEEFQERQFGSGQIIQKPKTT). Residues 248–268 (WWGLQGLNGIWSFLWLELLLF) form a helical membrane-spanning segment. Topologically, residues 269–297 (KKYLFFHSIHTVMLSGVFYVVIFMYPEWF) are cytoplasmic. The helical transmembrane segment at 298-318 (YLLFFLIVSAVMLSSYYSGIV) threads the bilayer. Residues 319-341 (RHSQSGTLHLFPGALWKKIIILE) lie on the Extracellular side of the membrane. A helical transmembrane segment spans residues 342–360 (LTNTVWLYILYCVSITFMA). Topologically, residues 361 to 363 (VGN) are cytoplasmic. Residues 364–382 (LVYWYIYGLGIYIWFMTIR) traverse the membrane as a helical segment. Residues 383-404 (LFAFTHTNRNDIKLSLPQYYKS) lie on the Extracellular side of the membrane. A helical membrane pass occupies residues 405–423 (FFMALGLSGICLYVIHLLT). Topologically, residues 424–426 (ADW) are cytoplasmic. A helical membrane pass occupies residues 427–447 (YTLVVVVCIGSLSWCLFYRFR).

It is found in the cell membrane. In terms of biological role, probably part of the ABC transporter SkfEF involved in the export of the bacteriocin SKF. Probably responsible for the translocation of bacteriocin SkfA across the membrane. This is Putative bacteriocin-SkfA transport system permease protein SkfF from Bacillus subtilis (strain 168).